The sequence spans 117 residues: Cuticle protein CP1246 (117 aa).

Tandem repeats lie at residues 1 to 17 (NYGE…LVQF), 26 to 43 (AEIG…HVQF), 67 to 84 (QSYG…NRQF), and 93 to 110 (VLVG…NVQF).

In terms of tissue distribution, calcified shell.

The chain is Cuticle protein CP1246 from Cancer pagurus (Rock crab).